The chain runs to 490 residues: MSLWSSVKFAQRYAQLPKVFYRLVTPQPLDNNRWVIWNGELAQGFALPKHADDPQLLSVFSGAEPFSAFKPLAMKYAGHQFGVYNPDLGDGRGLLLGEMQNQQGQWFDIHLKGAGLTPFSRMGDGRAVLRSTLREYLCSEAMAALGIETTRALGMMVSDTPVYREQVEQGACLIRLAQTHIRFGHFEHFFYTEQYDELRLLADNVIEWYMPECTAHDKPYLAMFEQVVARTATMIAQWQAVGFAHGVMNTDNMSILGQTFDYGPFGFLDDYEPGYICNHSDYQGRYAFDQQPRVALWNLSALAHALSPLIERDDLELALAQYEPTLGKVFSQLMRQKLGLLSQQEGDSELFNAMFALLAENHTDYTRFFRTLSQLDREDEQTVIDLFIDRDAAHGWLSRYLERVAMEQTASGEAKSAQQRCEQMRAVNPKYILRNYLAQQAIDKAQQGDFSEVHTLAKLLKNPYDEQAEMEAYAHLPPEWGKKMVISCSS.

ATP contacts are provided by G89, G91, R92, K112, D124, G125, R175, and R182. Catalysis depends on D251, which acts as the Proton acceptor. Mg(2+) contacts are provided by N252 and D261. D261 lines the ATP pocket.

This sequence belongs to the SELO family. It depends on Mg(2+) as a cofactor. The cofactor is Mn(2+).

It carries out the reaction L-seryl-[protein] + ATP = 3-O-(5'-adenylyl)-L-seryl-[protein] + diphosphate. The enzyme catalyses L-threonyl-[protein] + ATP = 3-O-(5'-adenylyl)-L-threonyl-[protein] + diphosphate. The catalysed reaction is L-tyrosyl-[protein] + ATP = O-(5'-adenylyl)-L-tyrosyl-[protein] + diphosphate. It catalyses the reaction L-histidyl-[protein] + UTP = N(tele)-(5'-uridylyl)-L-histidyl-[protein] + diphosphate. It carries out the reaction L-seryl-[protein] + UTP = O-(5'-uridylyl)-L-seryl-[protein] + diphosphate. The enzyme catalyses L-tyrosyl-[protein] + UTP = O-(5'-uridylyl)-L-tyrosyl-[protein] + diphosphate. In terms of biological role, nucleotidyltransferase involved in the post-translational modification of proteins. It can catalyze the addition of adenosine monophosphate (AMP) or uridine monophosphate (UMP) to a protein, resulting in modifications known as AMPylation and UMPylation. The polypeptide is Protein nucleotidyltransferase YdiU (Vibrio vulnificus (strain CMCP6)).